The following is a 109-amino-acid chain: Large ribosomal subunit protein uL18c (109 aa).

Belongs to the universal ribosomal protein uL18 family. In terms of assembly, part of the 50S ribosomal subunit; contacts the 5S rRNA.

It is found in the plastid. It localises to the chloroplast. In terms of biological role, binds 5S rRNA, forms part of the central protuberance of the 50S subunit. This chain is Large ribosomal subunit protein uL18c (rpl18), found in Cyanidioschyzon merolae (strain NIES-3377 / 10D) (Unicellular red alga).